The sequence spans 550 residues: ATP synthase subunit alpha (550 aa).

ATP is bound at residue 172-179 (GDRKTGKT). Residues 521-550 (EPAAEPLAGEEDRETVTRFHDDATDRPAGS) are disordered. Positions 534-550 (ETVTRFHDDATDRPAGS) are enriched in basic and acidic residues.

It belongs to the ATPase alpha/beta chains family. As to quaternary structure, F-type ATPases have 2 components, CF(1) - the catalytic core - and CF(0) - the membrane proton channel. CF(1) has five subunits: alpha(3), beta(3), gamma(1), delta(1), epsilon(1). CF(0) has three main subunits: a(1), b(2) and c(9-12). The alpha and beta chains form an alternating ring which encloses part of the gamma chain. CF(1) is attached to CF(0) by a central stalk formed by the gamma and epsilon chains, while a peripheral stalk is formed by the delta and b chains.

Its subcellular location is the cell membrane. The catalysed reaction is ATP + H2O + 4 H(+)(in) = ADP + phosphate + 5 H(+)(out). In terms of biological role, produces ATP from ADP in the presence of a proton gradient across the membrane. The alpha chain is a regulatory subunit. The sequence is that of ATP synthase subunit alpha from Salinispora tropica (strain ATCC BAA-916 / DSM 44818 / JCM 13857 / NBRC 105044 / CNB-440).